Reading from the N-terminus, the 317-residue chain is Ribosomal protein L11 methyltransferase (317 aa).

4 residues coordinate S-adenosyl-L-methionine: threonine 158, glycine 179, aspartate 201, and asparagine 244.

Belongs to the methyltransferase superfamily. PrmA family.

The protein localises to the cytoplasm. The enzyme catalyses L-lysyl-[protein] + 3 S-adenosyl-L-methionine = N(6),N(6),N(6)-trimethyl-L-lysyl-[protein] + 3 S-adenosyl-L-homocysteine + 3 H(+). In terms of biological role, methylates ribosomal protein L11. This chain is Ribosomal protein L11 methyltransferase, found in Streptococcus equi subsp. equi (strain 4047).